The chain runs to 172 residues: Adenine phosphoribosyltransferase (172 aa).

Belongs to the purine/pyrimidine phosphoribosyltransferase family. In terms of assembly, homodimer.

Its subcellular location is the cytoplasm. It carries out the reaction AMP + diphosphate = 5-phospho-alpha-D-ribose 1-diphosphate + adenine. Its pathway is purine metabolism; AMP biosynthesis via salvage pathway; AMP from adenine: step 1/1. Functionally, catalyzes a salvage reaction resulting in the formation of AMP, that is energically less costly than de novo synthesis. This chain is Adenine phosphoribosyltransferase, found in Exiguobacterium sp. (strain ATCC BAA-1283 / AT1b).